The following is a 241-amino-acid chain: Trypsin-10 (241 aa).

Residues 1–13 (MKSLIFVLLLGAV) form the signal peptide. The propeptide at 14–19 (FAEEDK) is activation peptide. In terms of domain architecture, Peptidase S1 spans 20 to 239 (IVGGYECTRH…LSGWVRDTMA (220 aa)). 6 cysteine pairs are disulfide-bonded: Cys26–Cys155, Cys44–Cys60, Cys128–Cys228, Cys135–Cys201, Cys166–Cys180, and Cys191–Cys215. Residues His59 and Asp103 each act as charge relay system in the active site. The active-site Charge relay system is Ser195.

Belongs to the peptidase S1 family.

It localises to the secreted. Its subcellular location is the extracellular space. It catalyses the reaction Preferential cleavage: Arg-|-Xaa, Lys-|-Xaa.. The polypeptide is Trypsin-10 (Gadus morhua (Atlantic cod)).